The primary structure comprises 1092 residues: MDGKRKFNGTSNGHAKKPRNPDDDEEMGFEAELAAFENSEDMDQTLLMGDGPENQTTSERWSRPPPPELDPSKHNLEFQQLDVENYLGQPLPGMPGAQIGPVPVVRMFGVTMEGNSVCCHVHGFCPYFYIEAPSQFEEHHCEKLQKALDQKVIADIRNNKDNVQEAVLMVELVEKLNIHGYNGDKKQRYIKISVTLPRFVAAASRLLKKEVIMSEIDFQDCRAFENNIDFDIRFMVDTDVVGCNWIELPMGHWRIRNSHSKPLPESRCQIEVDVAFDRFISHEPEGEWSKVAPFRILSFDIECAGRKGIFPEAKIDPVIQIANMVIRQGEREPFIRNVFTLNECAPIIGSQVLCHDKETQMLDKWSAFVREVDPDILTGYNINNFDFPYLLNRAAHLKVRNFEYLGRIKNIRSVIKEQMLQSKQMGRRENQYVNFEGRVPFDLLFVLLRDYKLRSYTLNAVSYHFLQEQKEDVHHSIITDLQNGDEQTRRRLAMYCLKDAYLPLRLLEKLMAIVNYMEMARVTGVPLESLLTRGQQIKVLSQLLRKAKTKGFIMPSYTSQGSDEQYEGATVIEPKRGYYADPISTLDFASLYPSIMMAHNLCYTTLVLGGTREKLRQQENLQDDQVERTPANNYFVKSEVRRGLLPEILESLLAARKRAKNDLKVETDPFKRKVLDGRQLALKISANSVYGFTGAQVGKLPCLEISGSVTAYGRTMIEMTKNEVESHYTQANGYENNAVVIYGDTDSVMVNFGVKTLERSMELGREAAELVSSKFVHPIKLEFEKVYYPYLLINKKRYAGLYFTRPDTYDKMDCKGIETVRRDNSPLVANLMNSCLQKLLIERDPDGAVAYVKQVIADLLCNRIDISHLVITKELAKTDYAAKQAHVELAAKMKKRDPGTAPKLGDRVPYVICAAAKNTPAYQKAEDPLYVLENSVPIDATYYLEQQLSKPLLRIFEPILGDNAESILLKGEHTRTRTVVTSKVGGLAGFMTKKTSCLGCKSLMPKGYEQACLCPHCEPRMSELYQKEVGAKRELEETFSRLWTECQRCQESLHEEVICSNRDCPIFYMRQKVRMDLDNQEKRVLRFGLAEW.

The segment at 1-71 (MDGKRKFNGT…SRPPPPELDP (71 aa)) is disordered. The Nuclear localization signal motif lies at 4–19 (KRKFNGTSNGHAKKPR). 4 residues coordinate Zn(2+): cysteine 997, cysteine 1000, cysteine 1014, and cysteine 1017. A CysA-type zinc finger spans residues 997-1017 (CLGCKSLMPKGYEQACLCPHC). Cysteine 1046, cysteine 1049, cysteine 1059, and cysteine 1064 together coordinate [4Fe-4S] cluster. Residues 1046-1064 (CQRCQESLHEEVICSNRDC) carry the CysB motif motif.

Belongs to the DNA polymerase type-B family. As to quaternary structure, catalytic component of the DNA polymerase delta complex consisting of three subunits: the catalytic subunit PolD1 and two accessory subunits PolD2/Pol31 and PolD3/Pol32. Within the delta complex, interacts with both PolD2 and PolD3, and is able to interact with PolD2 in the absence of PolD3. Interacts with PCNA and PCNA2. The cofactor is [4Fe-4S] cluster. Mg(2+) is required as a cofactor. As to expression, expressed in ovaries (at the protein level). Expressed in embryos (at the protein level).

It localises to the nucleus. The protein localises to the nucleoplasm. It catalyses the reaction DNA(n) + a 2'-deoxyribonucleoside 5'-triphosphate = DNA(n+1) + diphosphate. With respect to regulation, inhibited by KCL. Also inhibited by carbonyldiphosphonate, aphidicolin and N-ethylmaleimide (NEM). As the catalytic component of the DNA polymerase delta complex, plays a crucial role in high fidelity genome replication, including lagging strand synthesis, DNA recombination and repair. Exhibits both DNA polymerase and 3'- to 5'-exonuclease activities. Required at the nucleus of rapidly dividing embryonic cells to activate genome replication during the earliest cell cycles. Likely to require the presence of accessory proteins PolD2 and PolD3 for full activity. In Drosophila melanogaster (Fruit fly), this protein is DNA polymerase delta catalytic subunit.